The following is a 232-amino-acid chain: MGKLTKNQKLAAGKIEAGKAYSLKEAASLVKEITFTKFDASLDIDVRLGVDPRKANQMVRGVVSLPHGTGKQVRVLVLCTPDAEAAAKEAGADYVGLDEYIEKIKGGWTDIDVIITMPSIMGKIGALGRVLGPRGLMPNPKSGTVTMDVAKAVREVKQGKIDFKVDKSGIVHTSIGKVSFTAEQIRDNAKEFISTLNKLKPTAAKGTYIKSIYLSSTMSAGIKIDPKSVEEI.

This sequence belongs to the universal ribosomal protein uL1 family. As to quaternary structure, part of the 50S ribosomal subunit.

In terms of biological role, binds directly to 23S rRNA. The L1 stalk is quite mobile in the ribosome, and is involved in E site tRNA release. Its function is as follows. Protein L1 is also a translational repressor protein, it controls the translation of the L11 operon by binding to its mRNA. This Bacteroides fragilis (strain ATCC 25285 / DSM 2151 / CCUG 4856 / JCM 11019 / LMG 10263 / NCTC 9343 / Onslow / VPI 2553 / EN-2) protein is Large ribosomal subunit protein uL1.